The following is a 106-amino-acid chain: UPF0449 protein C19orf25 homolog (106 aa).

This sequence belongs to the UPF0449 family.

The protein is UPF0449 protein C19orf25 homolog of Xenopus tropicalis (Western clawed frog).